The sequence spans 229 residues: Trehalose-6-phosphate phosphatase-related protein (229 aa).

D5 (nucleophile) is an active-site residue. Residues D5, D7, and D177 each contribute to the Mg(2+) site. 5–7 contacts substrate; sequence DYD.

This sequence belongs to the trehalose phosphatase family. It depends on Mg(2+) as a cofactor.

The catalysed reaction is alpha,alpha-trehalose 6-phosphate + H2O = alpha,alpha-trehalose + phosphate. The protein operates within glycan biosynthesis; trehalose biosynthesis. Functionally, removes the phosphate from trehalose 6-phosphate (Tre6P) to produce free trehalose. Also catalyzes the dephosphorylation of para-nitrophenyl phosphate (pNPP), but with lesser efficiency (in vitro). This chain is Trehalose-6-phosphate phosphatase-related protein, found in Thermoplasma acidophilum (strain ATCC 25905 / DSM 1728 / JCM 9062 / NBRC 15155 / AMRC-C165).